Here is a 356-residue protein sequence, read N- to C-terminus: Peptide chain release factor 1 (356 aa).

Gln235 is subject to N5-methylglutamine.

Belongs to the prokaryotic/mitochondrial release factor family. In terms of processing, methylated by PrmC. Methylation increases the termination efficiency of RF1.

The protein resides in the cytoplasm. Its function is as follows. Peptide chain release factor 1 directs the termination of translation in response to the peptide chain termination codons UAG and UAA. The protein is Peptide chain release factor 1 of Hydrogenobaculum sp. (strain Y04AAS1).